A 185-amino-acid polypeptide reads, in one-letter code: MINEIKKDTQDRMEKSLEALKSHISKIRTGRAQPSLLDGIQVEYYGSATPLRQLANVVAEDARTLAVNVFDRSLISAVEKAILTSDLGLNPSSAGATIRVPLPPLTEERRRDLIKIVKGEGEQGKIAIRNVRRDANDQIKALLKDKEISEDEERKAQDEIQKITDGYVKKVDEVLAAKEKELLDF.

Belongs to the RRF family.

It is found in the cytoplasm. Functionally, responsible for the release of ribosomes from messenger RNA at the termination of protein biosynthesis. May increase the efficiency of translation by recycling ribosomes from one round of translation to another. The sequence is that of Ribosome-recycling factor from Actinobacillus pleuropneumoniae serotype 5b (strain L20).